A 445-amino-acid polypeptide reads, in one-letter code: Methionine aminopeptidase 2 (445 aa).

A disordered region spans residues Met-1–Leu-89. The segment covering Ala-60–Asn-74 has biased composition (basic residues). His-198 contributes to the substrate binding site. A divalent metal cation-binding residues include Asp-218, Asp-229, and His-298. His-306 contacts substrate. A divalent metal cation-binding residues include Glu-331 and Glu-426.

Belongs to the peptidase M24A family. Methionine aminopeptidase eukaryotic type 2 subfamily. The cofactor is Co(2+). Zn(2+) is required as a cofactor. Requires Mn(2+) as cofactor. Fe(2+) serves as cofactor.

Its subcellular location is the cytoplasm. The enzyme catalyses Release of N-terminal amino acids, preferentially methionine, from peptides and arylamides.. Its function is as follows. Cotranslationally removes the N-terminal methionine from nascent proteins. The N-terminal methionine is often cleaved when the second residue in the primary sequence is small and uncharged (Met-Ala-, Cys, Gly, Pro, Ser, Thr, or Val). This is Methionine aminopeptidase 2 from Podospora anserina (strain S / ATCC MYA-4624 / DSM 980 / FGSC 10383) (Pleurage anserina).